The chain runs to 276 residues: 2,3,4,5-tetrahydropyridine-2,6-dicarboxylate N-succinyltransferase (276 aa).

Positions 104 and 141 each coordinate substrate.

It belongs to the transferase hexapeptide repeat family. Homotrimer.

It is found in the cytoplasm. The enzyme catalyses (S)-2,3,4,5-tetrahydrodipicolinate + succinyl-CoA + H2O = (S)-2-succinylamino-6-oxoheptanedioate + CoA. It functions in the pathway amino-acid biosynthesis; L-lysine biosynthesis via DAP pathway; LL-2,6-diaminopimelate from (S)-tetrahydrodipicolinate (succinylase route): step 1/3. This is 2,3,4,5-tetrahydropyridine-2,6-dicarboxylate N-succinyltransferase from Pseudoalteromonas translucida (strain TAC 125).